Reading from the N-terminus, the 228-residue chain is 5'-methylthioadenosine/S-adenosylhomocysteine nucleosidase (228 aa).

E11 (proton acceptor) is an active-site residue. Substrate is bound by residues G77, I151, and 172–173; that span reads ME. The active-site Proton donor is D196.

The protein belongs to the PNP/UDP phosphorylase family. MtnN subfamily.

The enzyme catalyses S-adenosyl-L-homocysteine + H2O = S-(5-deoxy-D-ribos-5-yl)-L-homocysteine + adenine. The catalysed reaction is S-methyl-5'-thioadenosine + H2O = 5-(methylsulfanyl)-D-ribose + adenine. It carries out the reaction 5'-deoxyadenosine + H2O = 5-deoxy-D-ribose + adenine. Its pathway is amino-acid biosynthesis; L-methionine biosynthesis via salvage pathway; S-methyl-5-thio-alpha-D-ribose 1-phosphate from S-methyl-5'-thioadenosine (hydrolase route): step 1/2. In terms of biological role, catalyzes the irreversible cleavage of the glycosidic bond in both 5'-methylthioadenosine (MTA) and S-adenosylhomocysteine (SAH/AdoHcy) to adenine and the corresponding thioribose, 5'-methylthioribose and S-ribosylhomocysteine, respectively. Also cleaves 5'-deoxyadenosine, a toxic by-product of radical S-adenosylmethionine (SAM) enzymes, into 5-deoxyribose and adenine. In Staphylococcus aureus (strain bovine RF122 / ET3-1), this protein is 5'-methylthioadenosine/S-adenosylhomocysteine nucleosidase.